The following is an 89-amino-acid chain: Small ribosomal subunit protein uS15c (89 aa).

This sequence belongs to the universal ribosomal protein uS15 family. In terms of assembly, part of the 30S ribosomal subunit.

Its subcellular location is the plastid. In Aneura mirabilis (Parasitic liverwort), this protein is Small ribosomal subunit protein uS15c (rps15).